The chain runs to 360 residues: DNA replication and repair protein RecF (360 aa).

ATP is bound at residue 30-37; it reads GQNGSGKT.

The protein belongs to the RecF family.

The protein localises to the cytoplasm. In terms of biological role, the RecF protein is involved in DNA metabolism; it is required for DNA replication and normal SOS inducibility. RecF binds preferentially to single-stranded, linear DNA. It also seems to bind ATP. The protein is DNA replication and repair protein RecF of Shewanella sp. (strain W3-18-1).